An 888-amino-acid chain; its full sequence is Alanine--tRNA ligase (888 aa).

Zn(2+) is bound by residues His-573, His-577, Cys-676, and His-680.

It belongs to the class-II aminoacyl-tRNA synthetase family. Zn(2+) is required as a cofactor.

The protein resides in the cytoplasm. It catalyses the reaction tRNA(Ala) + L-alanine + ATP = L-alanyl-tRNA(Ala) + AMP + diphosphate. In terms of biological role, catalyzes the attachment of alanine to tRNA(Ala) in a two-step reaction: alanine is first activated by ATP to form Ala-AMP and then transferred to the acceptor end of tRNA(Ala). Also edits incorrectly charged Ser-tRNA(Ala) and Gly-tRNA(Ala) via its editing domain. In Corynebacterium glutamicum (strain ATCC 13032 / DSM 20300 / JCM 1318 / BCRC 11384 / CCUG 27702 / LMG 3730 / NBRC 12168 / NCIMB 10025 / NRRL B-2784 / 534), this protein is Alanine--tRNA ligase.